The sequence spans 480 residues: Glutamate--tRNA ligase (480 aa).

A 'HIGH' region motif is present at residues 21-31; the sequence is PSPTGYLHVGG. Residues cysteine 110, cysteine 112, cysteine 137, and histidine 139 each contribute to the Zn(2+) site. A 'KMSKS' region motif is present at residues 248-252; it reads KLSKR. Lysine 251 is an ATP binding site.

It belongs to the class-I aminoacyl-tRNA synthetase family. Glutamate--tRNA ligase type 1 subfamily. Monomer. Zn(2+) is required as a cofactor.

The protein resides in the cytoplasm. It carries out the reaction tRNA(Glu) + L-glutamate + ATP = L-glutamyl-tRNA(Glu) + AMP + diphosphate. In terms of biological role, catalyzes the attachment of glutamate to tRNA(Glu) in a two-step reaction: glutamate is first activated by ATP to form Glu-AMP and then transferred to the acceptor end of tRNA(Glu). This chain is Glutamate--tRNA ligase, found in Histophilus somni (strain 2336) (Haemophilus somnus).